The following is a 431-amino-acid chain: Teosinte glume architecture 1 (431 aa).

Disordered regions lie at residues 18-55 (QDHAAAAPSSGGHAANAAAAGTGTESRPPAPGAAGAPA) and 68-102 (ECEPGAARREREAAAGAAKRPRPAGPGGQQQQQCP). Positions 21-41 (AAAAPSSGGHAANAAAAGTGT) are enriched in low complexity. The SBP-type zinc finger occupies 101–178 (CPSCAVDGCR…DGHNRRRRKP (78 aa)). Zn(2+)-binding residues include Cys-104, Cys-109, Cys-126, His-129, Cys-145, Cys-148, His-152, and Cys-164. Gly residues predominate over residues 408–419 (GGGSGGGEGSSD). Residues 408–431 (GGGSGGGEGSSDGGTSSSMPFSWQ) are disordered.

As to quaternary structure, monomer and homodimer. Strongly expressed in immature ears and weakly in husks. Found in the inflorescence meristem of the developing ear, in the spikelet pair primordia, the glume primordia, the cupule forming region and other floral organs. Not detected in other tissues.

In terms of biological role, SBP transcriptional regulator probably involved in the domestication of maize. Acts as a transcriptional repressor binding to a 5'-GTAC-3' motif. May repress the growth of lateral branches in length and numbers. The chain is Teosinte glume architecture 1 from Zea mays (Maize).